The chain runs to 235 residues: Proteasome subunit alpha (235 aa).

This sequence belongs to the peptidase T1A family. In terms of assembly, the 20S proteasome core is composed of 14 alpha and 14 beta subunits that assemble into four stacked heptameric rings, resulting in a barrel-shaped structure. The two inner rings, each composed of seven catalytic beta subunits, are sandwiched by two outer rings, each composed of seven alpha subunits. The catalytic chamber with the active sites is on the inside of the barrel. Has a gated structure, the ends of the cylinder being occluded by the N-termini of the alpha-subunits. Is capped by the proteasome-associated ATPase, ARC.

Its subcellular location is the cytoplasm. The protein operates within protein degradation; proteasomal Pup-dependent pathway. With respect to regulation, the formation of the proteasomal ATPase ARC-20S proteasome complex, likely via the docking of the C-termini of ARC into the intersubunit pockets in the alpha-rings, may trigger opening of the gate for substrate entry. Interconversion between the open-gate and close-gate conformations leads to a dynamic regulation of the 20S proteasome proteolysis activity. In terms of biological role, component of the proteasome core, a large protease complex with broad specificity involved in protein degradation. This is Proteasome subunit alpha from Paenarthrobacter aurescens (strain TC1).